The primary structure comprises 257 residues: Deoxyribose-phosphate aldolase (257 aa).

D102 (proton donor/acceptor) is an active-site residue. K166 serves as the catalytic Schiff-base intermediate with acetaldehyde. K198 functions as the Proton donor/acceptor in the catalytic mechanism.

The protein belongs to the DeoC/FbaB aldolase family. DeoC type 2 subfamily.

It localises to the cytoplasm. It carries out the reaction 2-deoxy-D-ribose 5-phosphate = D-glyceraldehyde 3-phosphate + acetaldehyde. Its pathway is carbohydrate degradation; 2-deoxy-D-ribose 1-phosphate degradation; D-glyceraldehyde 3-phosphate and acetaldehyde from 2-deoxy-alpha-D-ribose 1-phosphate: step 2/2. Functionally, catalyzes a reversible aldol reaction between acetaldehyde and D-glyceraldehyde 3-phosphate to generate 2-deoxy-D-ribose 5-phosphate. The chain is Deoxyribose-phosphate aldolase from Aeromonas salmonicida (strain A449).